A 436-amino-acid chain; its full sequence is MAIASTLASTQNPFLCLRQPPSPGNRSVVFRRCQDPCGRRWISRSIRACQPSDKVSGQFPFDFMYSSMLIPSSCGEWNRIHLGGDGGISASAQRLYFGKELLSFASDNFLPLALVSGVGLGFANPTLGCLADKYSFTKISTCGIFIISGLTLRTEAIGAAVKGWPLGLFGLISILLLTPSFSRLIMLVQLQPRELVTGLGIFCCMPTTLSSGVALTHLAGGNAALALAVTVASNLLGILTIPFWVSRYIAGGVGVSFPTDQLFRSLIVTLLIPLIIGKVIRESFKGFANFVDNNRKLFSKINAICLSLVPWIQVSRSRSLLLSVQPKVFLAAVGIGILLHLSLLAFNAVSIRILSGLTGGSKSSKENSTAVLLVSSQKTLPVMVAVVEQLGGAFGETGLLVLPCVAAHLNQIMIDSVLVNLWLRRGKDTSTKVKTA.

Residues Met1–Arg47 constitute a chloroplast transit peptide. 9 helical membrane passes run Phe109–Cys129, Ala131–Thr151, Ile157–Leu177, Leu195–Leu215, Leu225–Val245, Phe257–Gly277, Leu297–Val314, Val328–Ala348, and Pro403–Leu423.

It belongs to the bile acid:sodium symporter (BASS) (TC 2.A.28) family.

Its subcellular location is the membrane. It is found in the plastid. It localises to the chloroplast envelope. In terms of biological role, may function as sodium-coupled metabolite transporter across the chloroplast envelope. The polypeptide is Probable sodium/metabolite cotransporter BASS4, chloroplastic (BASS4) (Arabidopsis thaliana (Mouse-ear cress)).